Here is a 274-residue protein sequence, read N- to C-terminus: HTH-type transcriptional regulator GadX (274 aa).

An HTH araC/xylS-type domain is found at 145–242 (TRVCTVINNN…GMTPTEYQER (98 aa)). DNA-binding regions (H-T-H motif) lie at residues 162 to 183 (ARIA…REEE) and 209 to 232 (IKRV…RNYY).

As to quaternary structure, homodimer.

Its function is as follows. Positively regulates the expression of about fifteen genes involved in acid resistance such as gadA, gadB and gadC. Depending on the conditions (growth phase and medium), can repress gadW. This chain is HTH-type transcriptional regulator GadX (gadX), found in Shigella flexneri.